A 1338-amino-acid polypeptide reads, in one-letter code: ABC-type transporter kk1G (1338 aa).

Positions Met1–His21 are disordered. The span at Ser11 to His21 shows a compositional bias: basic and acidic residues. 6 helical membrane passes run Tyr75 to Met95, Leu130 to Ile150, His203 to Val223, Leu230 to Phe250, Thr312 to Ile332, and Ile340 to Ile360. One can recognise an ABC transmembrane type-1 1 domain in the interval Leu80–Lys372. The ABC transporter 1 domain occupies Ile405–His706. Gly440–Ser447 contacts ATP. Disordered stretches follow at residues Glu473 to Gly518 and Glu715 to Arg747. 6 helical membrane-spanning segments follow: residues Val777 to Ala797, Phe816 to Gly836, Met895 to Trp917, Leu919 to Leu941, Ile1003 to Gly1023, and Phe1037 to Phe1057. The 287-residue stretch at Val777–Gln1063 folds into the ABC transmembrane type-1 2 domain. The ABC transporter 2 domain occupies Ile1096–Ala1333. Residue Gly1130 to Ser1137 coordinates ATP.

Belongs to the ABC transporter superfamily. ABCB family. Multidrug resistance exporter (TC 3.A.1.201) subfamily.

The protein localises to the cell membrane. It functions in the pathway secondary metabolite biosynthesis. Functionally, ABC transporter; part of the gene cluster that mediates the biosynthesis of KK-1, a novel cyclic depsipeptide with 10 residues which is a promising active compound with high activity against many plant pathogens, especially Botrytis cinerea. Is probably directly involved in the secretion of KK-1 and thus confers self-tolerance against KK-1. The polypeptide is ABC-type transporter kk1G (Curvularia clavata).